The sequence spans 354 residues: Regulatory protein RapD (354 aa).

TPR repeat units lie at residues 64–105, 107–126, 130–163, 171–204, 211–244, and 321–353; these read FENQ…VKTA, KHAVHHFKKAEQYLAAIHNT, ADLYYQTAGAYYLMKSPPLSVQYVKKALHIYLHQ, ITCKLLLAVNYIDQERYEKAEQLFKEIIKKTQQL, CHAYYNLGFLKATEKKDQEALLYFRKVLKNQEFE, and IEAWVDLEVLLEDITEYYKKKDDFEKAAFFIMR.

Belongs to the Rap family.

It localises to the cytoplasm. The polypeptide is Regulatory protein RapD (rapD) (Bacillus subtilis (strain 168)).